Reading from the N-terminus, the 321-residue chain is Lipoyl synthase (321 aa).

Cys-68, Cys-73, Cys-79, Cys-94, Cys-98, Cys-101, and Ser-308 together coordinate [4Fe-4S] cluster. In terms of domain architecture, Radical SAM core spans 80 to 297 (FNHGTATFMI…KEIALELGFT (218 aa)).

It belongs to the radical SAM superfamily. Lipoyl synthase family. Requires [4Fe-4S] cluster as cofactor.

It is found in the cytoplasm. The catalysed reaction is [[Fe-S] cluster scaffold protein carrying a second [4Fe-4S](2+) cluster] + N(6)-octanoyl-L-lysyl-[protein] + 2 oxidized [2Fe-2S]-[ferredoxin] + 2 S-adenosyl-L-methionine + 4 H(+) = [[Fe-S] cluster scaffold protein] + N(6)-[(R)-dihydrolipoyl]-L-lysyl-[protein] + 4 Fe(3+) + 2 hydrogen sulfide + 2 5'-deoxyadenosine + 2 L-methionine + 2 reduced [2Fe-2S]-[ferredoxin]. Its pathway is protein modification; protein lipoylation via endogenous pathway; protein N(6)-(lipoyl)lysine from octanoyl-[acyl-carrier-protein]: step 2/2. Catalyzes the radical-mediated insertion of two sulfur atoms into the C-6 and C-8 positions of the octanoyl moiety bound to the lipoyl domains of lipoate-dependent enzymes, thereby converting the octanoylated domains into lipoylated derivatives. The sequence is that of Lipoyl synthase from Vibrio vulnificus (strain CMCP6).